Reading from the N-terminus, the 108-residue chain is Beta-defensin 126 (108 aa).

The N-terminal stretch at 1–20 (MKSLLFTLAVFMLLAQLVSG) is a signal peptide. The tract at residues 21 to 63 (NWYVKKCLNDVGICKKKCKPGEMHIKNGWATCGKQRDCCVPAD) is in vitro binds to LPS, mediates antimicrobial activity and inhibits LPS-mediated inflammation. 3 disulfide bridges follow: Cys-27–Cys-58, Cys-34–Cys-52, and Cys-38–Cys-59.

This sequence belongs to the beta-defensin family. In terms of assembly, homodimer or homooligomer; disulfide-linked. O-glycosylated; glycans contain alpha(2,3)-linked sialic acids.

The protein resides in the secreted. In terms of biological role, highly glycosylated atypical beta-defensin involved in several aspects of sperm function. Facilitates sperm transport in the female reproductive tract and contributes to sperm protection against immunodetection; both functions are probably implicating the negative surface charge provided by its O-linked oligosaccharides in the sperm glycocalyx. Involved in binding of sperm to oviductal epithelial cells to form a sperm reservoir until ovulation. Release from the sperm surface during capacitation and ovaluation by an elevation of oviductal fluid pH is unmasking other surface components and allows sperm to penetrate the cumulus matrix and bind to the zona pellucida of the oocyte. In vitro has antimicrobial activity and may inhibit LPS-mediated inflammation. This is Beta-defensin 126 (DEFB126) from Pan troglodytes (Chimpanzee).